The sequence spans 299 residues: UDP-N-acetylenolpyruvoylglucosamine reductase (299 aa).

Residues 28-193 enclose the FAD-binding PCMH-type domain; it reads KVGGPADILA…LSAKFELQAG (166 aa). Arg-172 is a catalytic residue. Ser-222 functions as the Proton donor in the catalytic mechanism. Residue Glu-292 is part of the active site.

This sequence belongs to the MurB family. It depends on FAD as a cofactor.

It localises to the cytoplasm. The catalysed reaction is UDP-N-acetyl-alpha-D-muramate + NADP(+) = UDP-N-acetyl-3-O-(1-carboxyvinyl)-alpha-D-glucosamine + NADPH + H(+). The protein operates within cell wall biogenesis; peptidoglycan biosynthesis. Functionally, cell wall formation. This Lactococcus lactis subsp. cremoris (strain SK11) protein is UDP-N-acetylenolpyruvoylglucosamine reductase.